The chain runs to 339 residues: MIISPEEERSLIIKILNALGVSEEHAKITADVIVDADLKGFTSHGIGRFPQYVEGIKLGTIKTSGNIEIEKETDSVALINGNHLLGQVVAYKGMKLAIEKAKNTGVGIVGIHDSNHFGIAGYYSDMAMKNDMIGITMTNTEPAVAPLGGKIPVLGTNPIAISIPSNEYYVAVDMSTAAVARGKLLEAARKNEKIPEGIAVDKNGNPTTDPNEALNGSILPFGGHKGYALCFMIEILAGPLVKAEFGSKVKGTVDPSQMCTKGDLLIAIDPSKFYDIEEFKRNVDEFVKEIKSTGKDVLIPGDRERMNIKKREKEGIELDKKLVEKLKEIADELNIELTW.

Belongs to the LDH2/MDH2 oxidoreductase family. As to quaternary structure, homodimer.

The protein resides in the cytoplasm. The catalysed reaction is (S)-malate + NAD(+) = oxaloacetate + NADH + H(+). The enzyme catalyses (S)-malate + NADP(+) = oxaloacetate + NADPH + H(+). It carries out the reaction (2S)-3-sulfolactate + NAD(+) = 3-sulfopyruvate + NADH + H(+). Acts on oxaloacetate, sulfopyruvate but not on pyruvate. Has a higher selectivity for the coenzyme NADH than for NADPH. This Methanothermus fervidus (strain ATCC 43054 / DSM 2088 / JCM 10308 / V24 S) protein is Malate/(S)-sulfolactate dehydrogenase (mdh).